A 285-amino-acid polypeptide reads, in one-letter code: Golgi phosphoprotein 3-like (285 aa).

The tract at residues 1-42 (MTTLTHRARRTEISKNSEKKMESEEDSNWEKSPDNEDSGDSK) is disordered. Residues 10–42 (RTEISKNSEKKMESEEDSNWEKSPDNEDSGDSK) are compositionally biased toward basic and acidic residues. Residues Trp-67 and Arg-76 each contribute to the a 1,2-diacyl-sn-glycero-3-phospho-(1D-myo-inositol 4-phosphate) site. A Phosphoserine modification is found at Ser-112. Arg-157 and Arg-160 together coordinate a 1,2-diacyl-sn-glycero-3-phospho-(1D-myo-inositol 4-phosphate). The beta-hairpin required for oligomerization stretch occupies residues 176 to 187 (EKQNFLLFDMTT).

The protein belongs to the GOLPH3/VPS74 family. As to quaternary structure, homooligomer. Does not interact MYO18; differs from GOLPH3 by its inability to interact with MYO18. May interact with ARF1.

It localises to the golgi apparatus. The protein localises to the golgi stack membrane. Its subcellular location is the trans-Golgi network membrane. In terms of biological role, phosphatidylinositol-4-phosphate-binding protein that may antagonize the action of GOLPH3 which is required for the process of vesicle budding at the Golgi and anterograde transport to the plasma membrane. The polypeptide is Golgi phosphoprotein 3-like (GOLPH3L) (Homo sapiens (Human)).